Here is a 272-residue protein sequence, read N- to C-terminus: 3-methyl-2-oxobutanoate hydroxymethyltransferase (272 aa).

The Mg(2+) site is built by Asp-53 and Asp-92. 3-methyl-2-oxobutanoate-binding positions include Asp-53–Ser-54, Asp-92, and Lys-120. Glu-122 contacts Mg(2+). Glu-189 serves as the catalytic Proton acceptor.

This sequence belongs to the PanB family. As to quaternary structure, homodecamer; pentamer of dimers. The cofactor is Mg(2+).

The protein resides in the cytoplasm. The enzyme catalyses 3-methyl-2-oxobutanoate + (6R)-5,10-methylene-5,6,7,8-tetrahydrofolate + H2O = 2-dehydropantoate + (6S)-5,6,7,8-tetrahydrofolate. The protein operates within cofactor biosynthesis; (R)-pantothenate biosynthesis; (R)-pantoate from 3-methyl-2-oxobutanoate: step 1/2. Functionally, catalyzes the reversible reaction in which hydroxymethyl group from 5,10-methylenetetrahydrofolate is transferred onto alpha-ketoisovalerate to form ketopantoate. This chain is 3-methyl-2-oxobutanoate hydroxymethyltransferase, found in Ralstonia pickettii (strain 12J).